The chain runs to 154 residues: Protein X (154 aa).

The interval 28-48 is disordered; sequence RTLPGSLGAVPPPSSSAVPAD. Over residues 30-46 the composition is skewed to low complexity; the sequence is LPGSLGAVPPPSSSAVP. The interval 68-117 is mitochondrial targeting sequence; the sequence is PCALRFTSARRMETTVNAPWSLPTVLHKRTLGLSGRSMTWIEDYIKDCVF.

The protein belongs to the orthohepadnavirus protein X family. In terms of assembly, may form homodimer. May interact with host CEBPA, CFLAR, CREB1, DDB1, E4F1, HBXIP, HSPD1/HSP60, NFKBIA, POLR2E and SMAD4. Interacts with host SMC5-SMC6 complex and induces its degradation. Interacts with host TRPC4AP; leading to prevent ubiquitination of TRPC4AP. Interacts with host PLSCR1; this interaction promotes ubiquitination and degradation of HBx and impairs HBx-mediated cell proliferation. A fraction may be phosphorylated in insect cells and HepG2 cells, a human hepatoblastoma cell line. Phosphorylated in vitro by host protein kinase C or mitogen-activated protein kinase. N-acetylated in insect cells.

It localises to the host cytoplasm. The protein resides in the host nucleus. The protein localises to the host mitochondrion. Multifunctional protein that plays a role in silencing host antiviral defenses and promoting viral transcription. Does not seem to be essential for HBV infection. May be directly involved in development of cirrhosis and liver cancer (hepatocellular carcinoma). Most of cytosolic activities involve modulation of cytosolic calcium. The effect on apoptosis is controversial depending on the cell types in which the studies have been conducted. May induce apoptosis by localizing in mitochondria and causing loss of mitochondrial membrane potential. May also modulate apoptosis by binding host CFLAR, a key regulator of the death-inducing signaling complex (DISC). Promotes viral transcription by using the host E3 ubiquitin ligase DDB1 to target the SMC5-SMC6 complex to proteasomal degradation. This host complex would otherwise bind to viral episomal DNA, and prevents its transcription. Moderately stimulates transcription of many different viral and cellular transcription elements. Promoters and enhancers stimulated by HBx contain DNA binding sites for NF-kappa-B, AP-1, AP-2, c-EBP, ATF/CREB, or the calcium-activated factor NF-AT. The protein is Protein X of Homo sapiens (Human).